The chain runs to 400 residues: Argininosuccinate synthase (400 aa).

ATP contacts are provided by residues 10–18 and Ala38; that span reads AYSGGVDTS. L-citrulline is bound at residue Tyr89. Gly119 serves as a coordination point for ATP. L-aspartate-binding residues include Thr121, Asn125, and Asp126. Asn125 is an L-citrulline binding site. 5 residues coordinate L-citrulline: Arg129, Ser177, Ser186, Glu262, and Tyr274.

It belongs to the argininosuccinate synthase family. Type 1 subfamily. As to quaternary structure, homotetramer.

The protein localises to the cytoplasm. It catalyses the reaction L-citrulline + L-aspartate + ATP = 2-(N(omega)-L-arginino)succinate + AMP + diphosphate + H(+). It participates in amino-acid biosynthesis; L-arginine biosynthesis; L-arginine from L-ornithine and carbamoyl phosphate: step 2/3. The sequence is that of Argininosuccinate synthase from Crocosphaera subtropica (strain ATCC 51142 / BH68) (Cyanothece sp. (strain ATCC 51142)).